Here is an 83-residue protein sequence, read N- to C-terminus: MKGMIMLISCLMLIDVVVESKNGYIIEPKGCKYSCFWGSSTWCNRECKFKKGSSGYCAWPACWCYGLPDNVKIFDYYNNKCGK.

The signal sequence occupies residues 1–20 (MKGMIMLISCLMLIDVVVES). An LCN-type CS-alpha/beta domain is found at 21–82 (KNGYIIEPKG…IFDYYNNKCG (62 aa)). 4 disulfides stabilise this stretch: C31-C81, C35-C57, C43-C62, and C47-C64. The residue at position 81 (C81) is a Cysteine amide.

In terms of tissue distribution, expressed by the venom gland.

Its subcellular location is the secreted. Inhibits the sodium (Nav) currents in an apparent irreversible manner. Produces small depolarization and induces repetitive firing in squid axons. Is specific for arthropods (crickets, triatomides, crabs and squids), but is non-toxic to mice. Shows antibacterial activity against both Gram-positive and Gram-negative bacteria. The protein is Ardiscretin of Tityus discrepans (Venezuelan scorpion).